We begin with the raw amino-acid sequence, 644 residues long: Exoribonuclease 2 (644 aa).

Residues 189 to 516 enclose the RNB domain; that stretch reads RQDLTALNFV…NHRLLKAVIK (328 aa). Residues 561-643 enclose the S1 motif domain; sequence NTRFAAEIID…ETRSIIARPA (83 aa).

The protein belongs to the RNR ribonuclease family. RNase II subfamily.

It localises to the cytoplasm. The enzyme catalyses Exonucleolytic cleavage in the 3'- to 5'-direction to yield nucleoside 5'-phosphates.. Functionally, involved in mRNA degradation. Hydrolyzes single-stranded polyribonucleotides processively in the 3' to 5' direction. The protein is Exoribonuclease 2 of Salmonella choleraesuis (strain SC-B67).